The sequence spans 682 residues: Glutamine--fructose-6-phosphate aminotransferase [isomerizing] 2 (682 aa).

Cys-2 (for GATase activity) is an active-site residue. In terms of domain architecture, Glutamine amidotransferase type-2 spans 2–288 (CGIFAYMNYR…DDDIAAVADG (287 aa)). Ser-244 is modified (phosphoserine). SIS domains follow at residues 360–499 (HLKE…DRIS) and 531–672 (LALE…VDFP). Residues 377–378 (TS), 422–424 (SQS), Thr-427, and His-578 contribute to the substrate site.

The catalysed reaction is D-fructose 6-phosphate + L-glutamine = D-glucosamine 6-phosphate + L-glutamate. The protein operates within nucleotide-sugar biosynthesis; UDP-N-acetyl-alpha-D-glucosamine biosynthesis; alpha-D-glucosamine 6-phosphate from D-fructose 6-phosphate: step 1/1. Its function is as follows. Controls the flux of glucose into the hexosamine pathway. Most likely involved in regulating the availability of precursors for N- and O-linked glycosylation of proteins. The chain is Glutamine--fructose-6-phosphate aminotransferase [isomerizing] 2 (Gfpt2) from Mus musculus (Mouse).